Reading from the N-terminus, the 114-residue chain is Procyclic form-specific polypeptide A-alpha (114 aa).

A signal peptide spans 1-27 (MAPRSLYLLAILLFSANLFAGVGFAAA). The disordered stretch occupies residues 33–95 (SNVIVKGGKG…EPEPEPGAAT (63 aa)). A compositionally biased stretch (acidic residues) spans 47 to 89 (DGPEEPEETGPEETGPEETGPEETGPEETGPEETGPEETEPEP). A run of 7 repeats spans residues 48 to 52 (GPEEP), 56 to 60 (GPEET), 61 to 65 (GPEET), 66 to 70 (GPEET), 71 to 75 (GPEET), 76 to 80 (GPEET), and 81 to 85 (GPEET). The interval 48 to 85 (GPEEPEETGPEETGPEETGPEETGPEETGPEETGPEET) is 7 X 5 AA tandem repeats of G-P-E-E-[PT]. Gly-92 carries the GPI-anchor amidated glycine lipid modification. Positions 93–114 (AATLKSVALPFAVAAAALVAAF) are excised as a propeptide.

The protein localises to the cell membrane. Its function is as follows. Major surface antigen of procyclic forms. This Trypanosoma brucei brucei protein is Procyclic form-specific polypeptide A-alpha (PARPA-ALPHA).